The primary structure comprises 206 residues: Cytidylate kinase (206 aa).

An ATP-binding site is contributed by 7–15 (GPAASGKGT).

It belongs to the cytidylate kinase family. Type 1 subfamily.

It is found in the cytoplasm. It carries out the reaction CMP + ATP = CDP + ADP. The catalysed reaction is dCMP + ATP = dCDP + ADP. This Azorhizobium caulinodans (strain ATCC 43989 / DSM 5975 / JCM 20966 / LMG 6465 / NBRC 14845 / NCIMB 13405 / ORS 571) protein is Cytidylate kinase.